Consider the following 228-residue polypeptide: DNA-binding response regulator MtrA (228 aa).

The 114-residue stretch at 7-120 (RILVVDDDAS…ELVARVRARL (114 aa)) folds into the Response regulatory domain. A 4-aspartylphosphate modification is found at Asp56. Residues 128–227 (AEMLSIADVE…VRGVGYKAGP (100 aa)) constitute a DNA-binding region (ompR/PhoB-type).

Post-translationally, phosphorylated by MtrB.

Functionally, member of the two-component regulatory system MtrA/MtrB. The polypeptide is DNA-binding response regulator MtrA (mtrA) (Mycobacterium bovis (strain ATCC BAA-935 / AF2122/97)).